Reading from the N-terminus, the 183-residue chain is Potassium-transporting ATPase KdpC subunit (183 aa).

Residues leucine 11–alanine 31 traverse the membrane as a helical segment.

The protein belongs to the KdpC family. As to quaternary structure, the system is composed of three essential subunits: KdpA, KdpB and KdpC.

The protein localises to the cell inner membrane. In terms of biological role, part of the high-affinity ATP-driven potassium transport (or Kdp) system, which catalyzes the hydrolysis of ATP coupled with the electrogenic transport of potassium into the cytoplasm. This subunit acts as a catalytic chaperone that increases the ATP-binding affinity of the ATP-hydrolyzing subunit KdpB by the formation of a transient KdpB/KdpC/ATP ternary complex. This Pseudomonas putida (strain W619) protein is Potassium-transporting ATPase KdpC subunit.